Here is a 429-residue protein sequence, read N- to C-terminus: 3-phosphoshikimate 1-carboxyvinyltransferase (429 aa).

3-phosphoshikimate contacts are provided by Lys-23, Ser-24, and Arg-28. Lys-23 is a binding site for phosphoenolpyruvate. Positions 97 and 125 each coordinate phosphoenolpyruvate. Residues Ser-170, Ser-171, Gln-172, Ser-198, Asp-314, Asn-338, and Lys-342 each coordinate 3-phosphoshikimate. Gln-172 contacts phosphoenolpyruvate. The active-site Proton acceptor is the Asp-314. Residues Arg-346, Arg-388, and Lys-413 each contribute to the phosphoenolpyruvate site.

This sequence belongs to the EPSP synthase family. In terms of assembly, monomer.

It is found in the cytoplasm. The enzyme catalyses 3-phosphoshikimate + phosphoenolpyruvate = 5-O-(1-carboxyvinyl)-3-phosphoshikimate + phosphate. The protein operates within metabolic intermediate biosynthesis; chorismate biosynthesis; chorismate from D-erythrose 4-phosphate and phosphoenolpyruvate: step 6/7. Its function is as follows. Catalyzes the transfer of the enolpyruvyl moiety of phosphoenolpyruvate (PEP) to the 5-hydroxyl of shikimate-3-phosphate (S3P) to produce enolpyruvyl shikimate-3-phosphate and inorganic phosphate. The sequence is that of 3-phosphoshikimate 1-carboxyvinyltransferase from Pectobacterium atrosepticum (strain SCRI 1043 / ATCC BAA-672) (Erwinia carotovora subsp. atroseptica).